Consider the following 943-residue polypeptide: Translation initiation factor IF-2 (943 aa).

Disordered regions lie at residues 96–229 (FIKR…ERRR) and 243–352 (AAPK…QRQQ). Low complexity predominate over residues 104-116 (DAPSDAAESAPSA). Basic and acidic residues-rich tracts occupy residues 120–163 (ELVR…EERA) and 171–229 (AEKK…ERRR). Over residues 278 to 293 (ATGSGTGARAAAPSAP) the composition is skewed to low complexity. Over residues 313–323 (TTKKKEIKTRG) the composition is skewed to basic and acidic residues. The region spanning 443-612 (SRAPVVTVMG…LLQAEVLELK (170 aa)) is the tr-type G domain. Residues 452-459 (GHVDHGKT) are G1. 452 to 459 (GHVDHGKT) serves as a coordination point for GTP. Residues 477–481 (GITQH) form a G2 region. A G3 region spans residues 498–501 (DTPG). GTP-binding positions include 498–502 (DTPGH) and 552–555 (TKAD). Positions 552–555 (TKAD) are G4. The tract at residues 588–590 (SSK) is G5.

The protein belongs to the TRAFAC class translation factor GTPase superfamily. Classic translation factor GTPase family. IF-2 subfamily.

Its subcellular location is the cytoplasm. Functionally, one of the essential components for the initiation of protein synthesis. Protects formylmethionyl-tRNA from spontaneous hydrolysis and promotes its binding to the 30S ribosomal subunits. Also involved in the hydrolysis of GTP during the formation of the 70S ribosomal complex. This Acidovorax sp. (strain JS42) protein is Translation initiation factor IF-2.